A 465-amino-acid chain; its full sequence is Methionine aminopeptidase 2-1 (465 aa).

The segment at M1 to A100 is disordered. Over residues R31–D40 the composition is skewed to basic and acidic residues. The span at S75–S87 shows a compositional bias: basic residues. Residue H216 coordinates substrate. Residues D237, D248, and H317 each contribute to the a divalent metal cation site. H325 serves as a coordination point for substrate. A divalent metal cation contacts are provided by E350 and E446.

The protein belongs to the peptidase M24A family. Methionine aminopeptidase eukaryotic type 2 subfamily. Co(2+) serves as cofactor. The cofactor is Zn(2+). Requires Mn(2+) as cofactor. It depends on Fe(2+) as a cofactor.

The protein resides in the cytoplasm. It carries out the reaction Release of N-terminal amino acids, preferentially methionine, from peptides and arylamides.. In terms of biological role, cotranslationally removes the N-terminal methionine from nascent proteins. The N-terminal methionine is often cleaved when the second residue in the primary sequence is small and uncharged (Met-Ala-, Cys, Gly, Pro, Ser, Thr, or Val). The chain is Methionine aminopeptidase 2-1 from Penicillium rubens (strain ATCC 28089 / DSM 1075 / NRRL 1951 / Wisconsin 54-1255) (Penicillium chrysogenum).